Here is a 381-residue protein sequence, read N- to C-terminus: Putative F-box protein At3g17500 (381 aa).

The F-box domain maps to 1-45 (MMSNLPLDLVEEILSRVPATSLKRLRSTCKSWNNCYKDQRFTEKH).

The polypeptide is Putative F-box protein At3g17500 (Arabidopsis thaliana (Mouse-ear cress)).